Reading from the N-terminus, the 334-residue chain is Glycerol-3-phosphate dehydrogenase [NAD(P)+] (334 aa).

Residues Y14 and K108 each coordinate NADPH. Sn-glycerol 3-phosphate contacts are provided by K108, G140, and S142. Residue A144 coordinates NADPH. 5 residues coordinate sn-glycerol 3-phosphate: K195, D248, S258, R259, and N260. K195 (proton acceptor) is an active-site residue. R259 is an NADPH binding site. E285 serves as a coordination point for NADPH.

The protein belongs to the NAD-dependent glycerol-3-phosphate dehydrogenase family.

It is found in the cytoplasm. It catalyses the reaction sn-glycerol 3-phosphate + NAD(+) = dihydroxyacetone phosphate + NADH + H(+). It carries out the reaction sn-glycerol 3-phosphate + NADP(+) = dihydroxyacetone phosphate + NADPH + H(+). It functions in the pathway membrane lipid metabolism; glycerophospholipid metabolism. Catalyzes the reduction of the glycolytic intermediate dihydroxyacetone phosphate (DHAP) to sn-glycerol 3-phosphate (G3P), the key precursor for phospholipid synthesis. The chain is Glycerol-3-phosphate dehydrogenase [NAD(P)+] from Mesoplasma florum (strain ATCC 33453 / NBRC 100688 / NCTC 11704 / L1) (Acholeplasma florum).